Here is a 511-residue protein sequence, read N- to C-terminus: V-type proton ATPase subunit B, brain isoform (511 aa).

Residue arginine 400 participates in ATP binding.

This sequence belongs to the ATPase alpha/beta chains family. As to quaternary structure, V-ATPase is a heteromultimeric enzyme made up of two complexes: the ATP-hydrolytic V1 complex and the proton translocation V0 complex. The V1 complex consists of three catalytic AB heterodimers that form a heterohexamer, three peripheral stalks each consisting of EG heterodimers, one central rotor including subunits D and F, and the regulatory subunits C and H. The proton translocation complex V0 consists of the proton transport subunit a, a ring of proteolipid subunits c9c'', rotary subunit d, subunits e and f, and the accessory subunits ATP6AP1/Ac45 and ATP6AP2/PRR. As to expression, kidney; found in early distal nephron, encompassing thick ascending limbs and distal convoluted tubules and in the alpha-intercalated cells of the cortical collecting ducts (at protein level). Expressed in epididymal clear cells (at protein level). Mainly expressed in the organ of Corti and spiral ganglion neurons, in both the early postnatal cochlea (P2) and the adult cochlea (P30).

Its subcellular location is the apical cell membrane. It localises to the melanosome. The protein resides in the cytoplasm. It is found in the cytoplasmic vesicle. The protein localises to the secretory vesicle. Its subcellular location is the synaptic vesicle membrane. It localises to the clathrin-coated vesicle membrane. Its function is as follows. Non-catalytic subunit of the V1 complex of vacuolar(H+)-ATPase (V-ATPase), a multisubunit enzyme composed of a peripheral complex (V1) that hydrolyzes ATP and a membrane integral complex (V0) that translocates protons. V-ATPase is responsible for acidifying and maintaining the pH of intracellular compartments and in some cell types, is targeted to the plasma membrane, where it is responsible for acidifying the extracellular environment. In renal intercalated cells, can partially compensate the lack of ATP6V1B1 and mediate secretion of protons (H+) into the urine under base-line conditions but not in conditions of acid load. In Mus musculus (Mouse), this protein is V-type proton ATPase subunit B, brain isoform (Atp6v1b2).